The following is an 87-amino-acid chain: Antitoxin YefM (87 aa).

The protein belongs to the phD/YefM antitoxin family. In terms of assembly, forms a complex with YoeB which inhibits its toxin activity.

In terms of biological role, antitoxin component of a type II toxin-antitoxin (TA) system. A probable antitoxin for the putative mRNA interferase YeoB. The protein is Antitoxin YefM of Streptomyces coelicolor (strain ATCC BAA-471 / A3(2) / M145).